We begin with the raw amino-acid sequence, 271 residues long: Probable ribosomal RNA small subunit methyltransferase A (271 aa).

S-adenosyl-L-methionine contacts are provided by Leu12, Gly37, Glu58, Asp83, and Asn100.

The protein belongs to the class I-like SAM-binding methyltransferase superfamily. rRNA adenine N(6)-methyltransferase family. RsmA subfamily.

Its subcellular location is the cytoplasm. In terms of biological role, specifically dimethylates two adjacent adenosines in the loop of a conserved hairpin near the 3'-end of 16S rRNA in the 30S particle. May play a critical role in biogenesis of 30S subunits. The chain is Probable ribosomal RNA small subunit methyltransferase A from Methanococcus aeolicus (strain ATCC BAA-1280 / DSM 17508 / OCM 812 / Nankai-3).